The primary structure comprises 592 residues: Aspartate--tRNA(Asp/Asn) ligase (592 aa).

Residue Glu176 coordinates L-aspartate. Residues 200–203 (QIFK) are aspartate. An L-aspartate-binding site is contributed by Arg222. ATP is bound by residues 222–224 (RDE) and Gln231. His450 lines the L-aspartate pocket. Residue Glu484 participates in ATP binding. Arg491 is a binding site for L-aspartate. 536 to 539 (GLDR) contacts ATP.

It belongs to the class-II aminoacyl-tRNA synthetase family. Type 1 subfamily. In terms of assembly, homodimer.

The protein resides in the cytoplasm. The enzyme catalyses tRNA(Asx) + L-aspartate + ATP = L-aspartyl-tRNA(Asx) + AMP + diphosphate. Its function is as follows. Aspartyl-tRNA synthetase with relaxed tRNA specificity since it is able to aspartylate not only its cognate tRNA(Asp) but also tRNA(Asn). Reaction proceeds in two steps: L-aspartate is first activated by ATP to form Asp-AMP and then transferred to the acceptor end of tRNA(Asp/Asn). The polypeptide is Aspartate--tRNA(Asp/Asn) ligase (Anoxybacillus flavithermus (strain DSM 21510 / WK1)).